Here is a 547-residue protein sequence, read N- to C-terminus: MFS-type transporter M6 (547 aa).

Residues 1–45 (MHRRRRDNLMTPAEMVASMKPPQSLSTEDDDGSRRDSESSADVLK) form a disordered region. The helical transmembrane segment at 81–101 (VLVVASFAAAISPFSTSTYYP) threads the bilayer. Residue Asn118 is glycosylated (N-linked (GlcNAc...) asparagine). Residues 146 to 166 (PMFLVCFAIYFVANVGLALQN) form a helical membrane-spanning segment. N-linked (GlcNAc...) asparagine glycosylation occurs at Asn167. Helical transmembrane passes span 206-226 (LIYATLGSTLGPFLGPVIGGL) and 236-256 (VFWFLLCMGTVFALLIFIFFG). The N-linked (GlcNAc...) asparagine glycan is linked to Asn274. 5 consecutive transmembrane segments (helical) span residues 317–337 (FILSVSGGLLYAGYSSVTSVL), 347–367 (YDAVQVGLCYLPVGFGSLLAY), 407–427 (LGFVFPMILVCSVLLVAYGWQ), 432–452 (APLAPILVTMFLIAIILTGVM), and 469–489 (AVGAAMNLTRLLLGAGAVAVV). N-linked (GlcNAc...) asparagine glycosylation is present at Asn493. A helical transmembrane segment spans residues 496–516 (AGIGWTATVTAGLWVLMMPTL).

This sequence belongs to the major facilitator superfamily. CAR1 family.

It is found in the membrane. Functionally, MFS-type transporter; part of the gene cluster that mediates the biosynthesis of squalestatin S1 (SQS1, also known as zaragozic acid A), a heavily oxidized fungal polyketide that offers potent cholesterol lowering activity by targeting squalene synthase (SS). This is MFS-type transporter M6 from Phoma sp. (strain ATCC 20986 / MF5453).